The chain runs to 116 residues: uncharacterized protein (116 aa).

The CHY-type zinc-finger motif lies at 1–72 (MCKHVLNAQV…SDEYCPNCDN (72 aa)). Zn(2+) contacts are provided by C2, H4, C16, C17, C23, C26, H27, H33, C45, C48, C67, and C70.

It is found in the cytoplasm. This is an uncharacterized protein from Schizosaccharomyces pombe (strain 972 / ATCC 24843) (Fission yeast).